The chain runs to 293 residues: Nucleotide-binding protein Csac_1160 (293 aa).

11-18 (GMSGAGKS) lines the ATP pocket. A GTP-binding site is contributed by 62–65 (DIRG).

The protein belongs to the RapZ-like family.

In terms of biological role, displays ATPase and GTPase activities. The chain is Nucleotide-binding protein Csac_1160 from Caldicellulosiruptor saccharolyticus (strain ATCC 43494 / DSM 8903 / Tp8T 6331).